Consider the following 291-residue polypeptide: Protein US2 (291 aa).

Gly2 is subject to N-acetylglycine; by host. A disordered region spans residues 223 to 281 (NKPRPASSRPHPATHPTQRPCFTCMGRPEIPDEPSWQTGDDDPQNPGPPLAVGDEWPPS).

It belongs to the herpesviridae HHV-1 US2 protein family. As to quaternary structure, interacts with host KRT18. Interacts with host MAP3K7; this interaction induces host NF-kappa-B pathway.

It is found in the virion. The protein resides in the host cytoplasm. It localises to the host cell surface. Its subcellular location is the host nucleus. Plays a role in the activation of the host NF-kappa-B pathway by interacting with and thus activating the component MAP3K7. The sequence is that of Protein US2 from Human herpesvirus 2 (strain HG52) (HHV-2).